A 403-amino-acid polypeptide reads, in one-letter code: Ribosomal RNA large subunit methyltransferase I (403 aa).

Positions Tyr9–Arg88 constitute a PUA domain.

The protein belongs to the methyltransferase superfamily. RlmI family.

It is found in the cytoplasm. The enzyme catalyses cytidine(1962) in 23S rRNA + S-adenosyl-L-methionine = 5-methylcytidine(1962) in 23S rRNA + S-adenosyl-L-homocysteine + H(+). Functionally, specifically methylates the cytosine at position 1962 (m5C1962) of 23S rRNA. The sequence is that of Ribosomal RNA large subunit methyltransferase I from Salmonella schwarzengrund (strain CVM19633).